The chain runs to 339 residues: Ornithine utilization regulator (339 aa).

The HTH araC/xylS-type domain occupies 241 to 338; the sequence is TRVRRLLLAR…GKLPSDYREA (98 aa). 2 DNA-binding regions (H-T-H motif) span residues 258–279 and 305–328; these read EQAA…SSLG and LYEI…RKWT.

In terms of biological role, probably activates the ArgJ gene that encodes ornithine acetyltransferase. Binds to its own promoter-operator region. Probably binds ornithine. The protein is Ornithine utilization regulator (oruR) of Pseudomonas aeruginosa (strain ATCC 15692 / DSM 22644 / CIP 104116 / JCM 14847 / LMG 12228 / 1C / PRS 101 / PAO1).